Reading from the N-terminus, the 219-residue chain is 7-cyano-7-deazaguanine synthase (219 aa).

10–20 is a binding site for ATP; the sequence is FSGGQDSTTCL. The Zn(2+) site is built by C188, C196, C199, and C202.

Belongs to the QueC family. Requires Zn(2+) as cofactor.

It carries out the reaction 7-carboxy-7-deazaguanine + NH4(+) + ATP = 7-cyano-7-deazaguanine + ADP + phosphate + H2O + H(+). It participates in purine metabolism; 7-cyano-7-deazaguanine biosynthesis. In terms of biological role, catalyzes the ATP-dependent conversion of 7-carboxy-7-deazaguanine (CDG) to 7-cyano-7-deazaguanine (preQ(0)). The protein is 7-cyano-7-deazaguanine synthase of Neisseria gonorrhoeae (strain NCCP11945).